The following is a 280-amino-acid chain: Ribonuclease Z (280 aa).

Zn(2+) is bound by residues histidine 61, histidine 63, aspartate 65, histidine 66, histidine 153, aspartate 176, and histidine 240. Aspartate 65 (proton acceptor) is an active-site residue.

This sequence belongs to the RNase Z family. As to quaternary structure, homodimer. The cofactor is Zn(2+).

The catalysed reaction is Endonucleolytic cleavage of RNA, removing extra 3' nucleotides from tRNA precursor, generating 3' termini of tRNAs. A 3'-hydroxy group is left at the tRNA terminus and a 5'-phosphoryl group is left at the trailer molecule.. Zinc phosphodiesterase, which displays some tRNA 3'-processing endonuclease activity. Probably involved in tRNA maturation, by removing a 3'-trailer from precursor tRNA. The chain is Ribonuclease Z from Mycolicibacterium paratuberculosis (strain ATCC BAA-968 / K-10) (Mycobacterium paratuberculosis).